Consider the following 380-residue polypeptide: mRNA cap guanine-N(7) methyltransferase (380 aa).

The mRNA cap 0 methyltransferase domain maps to 24 to 333; sequence SRIFFMRNMN…MYLVFGFRKK (310 aa). 33-34 is a binding site for mRNA; the sequence is NN. S-adenosyl-L-methionine is bound by residues K37, A62, D84, D117, Q139, and Y144. The interval 336–380 is disordered; that stretch reads EAEKTEEEPATTKPVAESESEQKEVTESEEKEDQEDCEHQEAQTN.

The protein belongs to the class I-like SAM-binding methyltransferase superfamily. mRNA cap 0 methyltransferase family.

The protein localises to the nucleus. It carries out the reaction a 5'-end (5'-triphosphoguanosine)-ribonucleoside in mRNA + S-adenosyl-L-methionine = a 5'-end (N(7)-methyl 5'-triphosphoguanosine)-ribonucleoside in mRNA + S-adenosyl-L-homocysteine. Functionally, mRNA-capping methyltransferase that methylates the N7 position of the added guanosine to the 5'-cap structure of mRNAs. Binds RNA containing 5'-terminal GpppC. This Caenorhabditis elegans protein is mRNA cap guanine-N(7) methyltransferase (tag-72).